We begin with the raw amino-acid sequence, 217 residues long: Somatotropin (217 aa).

The first 27 residues, 1 to 27, serve as a signal peptide directing secretion; that stretch reads MMAAGPRTSLLLAFTLLCLPWTQVVGA. His-46 lines the Zn(2+) pocket. Cys-79 and Cys-190 are disulfide-bonded. A Phosphoserine modification is found at Ser-132. Glu-199 serves as a coordination point for Zn(2+). A disulfide bridge links Cys-207 with Cys-215.

The protein belongs to the somatotropin/prolactin family.

It localises to the secreted. Functionally, plays an important role in growth control. Its major role in stimulating body growth is to stimulate the liver and other tissues to secrete IGF1. It stimulates both the differentiation and proliferation of myoblasts. It also stimulates amino acid uptake and protein synthesis in muscle and other tissues. The protein is Somatotropin (GH1) of Capra hircus (Goat).